The sequence spans 70 residues: Beta-insect excitatory toxin LqqIT1 (70 aa).

Residues 2-65 form the LCN-type CS-alpha/beta domain; it reads KNGYAVDSSG…ISDARKKYCD (64 aa). 4 disulfide bridges follow: Cys-16-Cys-37, Cys-22-Cys-42, Cys-26-Cys-44, and Cys-38-Cys-64.

Belongs to the long (4 C-C) scorpion toxin superfamily. Sodium channel inhibitor family. Beta subfamily. Expressed by the venom gland.

It localises to the secreted. Functionally, excitatory insect beta-toxins induce a spastic paralysis. They bind voltage-independently at site-4 of sodium channels (Nav) and shift the voltage of activation toward more negative potentials thereby affecting sodium channel activation and promoting spontaneous and repetitive firing. In vivo, this toxin induces a fast excitatory contraction paralysis on fly larvae. It is active only on insects. This Leiurus quinquestriatus quinquestriatus (Egyptian scorpion) protein is Beta-insect excitatory toxin LqqIT1.